Here is a 135-residue protein sequence, read N- to C-terminus: Immunity protein RhsIA (135 aa).

A disordered region spans residues 58-77; the sequence is RKQGRQISLSCGEPPEYSPD.

Its function is as follows. Immunity component of a toxin-immunity protein module, which functions as a cellular contact-dependent growth inhibition (CDI) system. Specifically inhibits its cognate toxin RhsA. Cell contact is necessary for growth inhibition. This chain is Immunity protein RhsIA (rhsIA), found in Dickeya dadantii (strain 3937) (Erwinia chrysanthemi (strain 3937)).